A 711-amino-acid polypeptide reads, in one-letter code: Polyribonucleotide nucleotidyltransferase (711 aa).

Mg(2+)-binding residues include D486 and D492. The KH domain occupies 553-612 (PRIHTIKINPDKIKDVIGKGGSVIRALTEETGTTIEIEDDGTVKIAATDGEKAKHAIRRI). One can recognise an S1 motif domain in the interval 622-690 (GRVYTGKVTR…RQGRIRLSIK (69 aa)). The interval 690-711 (KEATEQSQPAAAPEAPAAEQGE) is disordered. Positions 694–711 (EQSQPAAAPEAPAAEQGE) are enriched in low complexity.

This sequence belongs to the polyribonucleotide nucleotidyltransferase family. As to quaternary structure, component of the RNA degradosome, which is a multiprotein complex involved in RNA processing and mRNA degradation. Requires Mg(2+) as cofactor.

It is found in the cytoplasm. The enzyme catalyses RNA(n+1) + phosphate = RNA(n) + a ribonucleoside 5'-diphosphate. Functionally, involved in mRNA degradation. Catalyzes the phosphorolysis of single-stranded polyribonucleotides processively in the 3'- to 5'-direction. The chain is Polyribonucleotide nucleotidyltransferase from Shigella dysenteriae serotype 1 (strain Sd197).